Consider the following 241-residue polypeptide: 3-oxoacyl-[acyl-carrier-protein] reductase FabG (241 aa).

Residues 13-16 (GASG), Ser-38, 57-58 (EV), and Asn-83 each bind NADP(+). Substrate is bound at residue Ser-135. Tyr-148 acts as the Proton acceptor in catalysis. NADP(+) is bound by residues 148 to 152 (YCASK) and Ile-181.

The protein belongs to the short-chain dehydrogenases/reductases (SDR) family. As to quaternary structure, homotetramer.

The enzyme catalyses a (3R)-hydroxyacyl-[ACP] + NADP(+) = a 3-oxoacyl-[ACP] + NADPH + H(+). It functions in the pathway lipid metabolism; fatty acid biosynthesis. Its function is as follows. Catalyzes the NADPH-dependent reduction of beta-ketoacyl-ACP substrates to beta-hydroxyacyl-ACP products, the first reductive step in the elongation cycle of fatty acid biosynthesis. This is 3-oxoacyl-[acyl-carrier-protein] reductase FabG (fabG) from Rickettsia conorii (strain ATCC VR-613 / Malish 7).